The primary structure comprises 147 residues: Protein-export protein SecB 2 (147 aa).

The protein belongs to the SecB family. As to quaternary structure, homotetramer, a dimer of dimers. One homotetramer interacts with 1 SecA dimer.

Its subcellular location is the cytoplasm. One of the proteins required for the normal export of preproteins out of the cell cytoplasm. It is a molecular chaperone that binds to a subset of precursor proteins, maintaining them in a translocation-competent state. It also specifically binds to its receptor SecA. The sequence is that of Protein-export protein SecB 2 from Francisella tularensis subsp. holarctica (strain FTNF002-00 / FTA).